An 855-amino-acid polypeptide reads, in one-letter code: DNA mismatch repair protein MutS (855 aa).

Gly-613–Ser-620 contributes to the ATP binding site.

The protein belongs to the DNA mismatch repair MutS family.

This protein is involved in the repair of mismatches in DNA. It is possible that it carries out the mismatch recognition step. This protein has a weak ATPase activity. The sequence is that of DNA mismatch repair protein MutS from Azotobacter vinelandii (strain DJ / ATCC BAA-1303).